A 607-amino-acid chain; its full sequence is Bifunctional lysine-specific demethylase and histidyl-hydroxylase NO66 (607 aa).

Disordered stretches follow at residues 23–121 (GPTI…IKTN) and 139–184 (ATQH…GEVE). The span at 25–37 (TIQQTGATKTPKT) shows a compositional bias: polar residues. A compositionally biased stretch (basic residues) spans 39-58 (SKIRRLSIRKSTRKIKHALK). The span at 156-167 (DKTPVKRVRSDT) shows a compositional bias: basic and acidic residues. In terms of domain architecture, JmjC spans 188 to 405 (EEAEKMFEWL…DLMEKLVPAA (218 aa)). Fe cation-binding residues include His328, Asp330, and His371.

The protein belongs to the ROX family. NO66 subfamily. It depends on Fe(2+) as a cofactor.

The protein localises to the nucleus. It carries out the reaction L-histidyl-[protein] + 2-oxoglutarate + O2 = (3S)-3-hydroxy-L-histidyl-[protein] + succinate + CO2. It catalyses the reaction N(6),N(6)-dimethyl-L-lysyl(36)-[histone H3] + 2 2-oxoglutarate + 2 O2 = L-lysyl(36)-[histone H3] + 2 formaldehyde + 2 succinate + 2 CO2. Its function is as follows. Oxygenase that can act as both a histone lysine demethylase and a ribosomal histidine hydroxylase. Specifically demethylates 'Lys-4' (H3K4me) and 'Lys-36' (H3K36me) of histone H3, thereby playing a central role in histone code. Also catalyzes the hydroxylation of 60S ribosomal protein L8. The sequence is that of Bifunctional lysine-specific demethylase and histidyl-hydroxylase NO66 from Branchiostoma floridae (Florida lancelet).